Consider the following 371-residue polypeptide: 4-hydroxy-3-methylbut-2-en-1-yl diphosphate synthase (flavodoxin) (371 aa).

[4Fe-4S] cluster contacts are provided by C270, C273, C305, and E312.

The protein belongs to the IspG family. The cofactor is [4Fe-4S] cluster.

It carries out the reaction (2E)-4-hydroxy-3-methylbut-2-enyl diphosphate + oxidized [flavodoxin] + H2O + 2 H(+) = 2-C-methyl-D-erythritol 2,4-cyclic diphosphate + reduced [flavodoxin]. The protein operates within isoprenoid biosynthesis; isopentenyl diphosphate biosynthesis via DXP pathway; isopentenyl diphosphate from 1-deoxy-D-xylulose 5-phosphate: step 5/6. Its function is as follows. Converts 2C-methyl-D-erythritol 2,4-cyclodiphosphate (ME-2,4cPP) into 1-hydroxy-2-methyl-2-(E)-butenyl 4-diphosphate. This Shewanella loihica (strain ATCC BAA-1088 / PV-4) protein is 4-hydroxy-3-methylbut-2-en-1-yl diphosphate synthase (flavodoxin).